Consider the following 513-residue polypeptide: GMP synthase [glutamine-hydrolyzing] (513 aa).

The Glutamine amidotransferase type-1 domain maps to 3-200 (SVLVLDFGSQ…LLNIAGITPD (198 aa)). The Nucleophile role is filled by Cys-80. Active-site residues include His-174 and Glu-176. The region spanning 201–388 (WSSKSFIDHQ…LGIAEDILMR (188 aa)) is the GMPS ATP-PPase domain. 228-234 (SGGVDST) serves as a coordination point for ATP.

Homodimer.

The catalysed reaction is XMP + L-glutamine + ATP + H2O = GMP + L-glutamate + AMP + diphosphate + 2 H(+). The protein operates within purine metabolism; GMP biosynthesis; GMP from XMP (L-Gln route): step 1/1. Its function is as follows. Catalyzes the synthesis of GMP from XMP. The chain is GMP synthase [glutamine-hydrolyzing] from Chlorobium phaeovibrioides (strain DSM 265 / 1930) (Prosthecochloris vibrioformis (strain DSM 265)).